The following is a 244-amino-acid chain: rRNA adenine N-6-methyltransferase (244 aa).

S-adenosyl-L-methionine contacts are provided by N11, I13, G38, E59, D84, and N101.

It belongs to the class I-like SAM-binding methyltransferase superfamily. rRNA adenine N(6)-methyltransferase family.

The catalysed reaction is adenosine(2085) in 23S rRNA + 2 S-adenosyl-L-methionine = N(6)-dimethyladenosine(2085) in 23S rRNA + 2 S-adenosyl-L-homocysteine + 2 H(+). Its function is as follows. This protein produces a dimethylation of the adenine residue at position 2085 in 23S rRNA, resulting in reduced affinity between ribosomes and macrolide-lincosamide-streptogramin B antibiotics. This Staphylococcus aureus protein is rRNA adenine N-6-methyltransferase (ermC).